Consider the following 156-residue polypeptide: Small ribosomal subunit protein uS7 (156 aa).

It belongs to the universal ribosomal protein uS7 family. In terms of assembly, part of the 30S ribosomal subunit. Contacts proteins S9 and S11.

Its function is as follows. One of the primary rRNA binding proteins, it binds directly to 16S rRNA where it nucleates assembly of the head domain of the 30S subunit. Is located at the subunit interface close to the decoding center, probably blocks exit of the E-site tRNA. This Herminiimonas arsenicoxydans protein is Small ribosomal subunit protein uS7.